A 199-amino-acid chain; its full sequence is 7-methyl-GTP pyrophosphatase (199 aa).

The Proton acceptor role is filled by Asp-76.

This sequence belongs to the Maf family. YceF subfamily. The cofactor is a divalent metal cation.

It localises to the cytoplasm. The enzyme catalyses N(7)-methyl-GTP + H2O = N(7)-methyl-GMP + diphosphate + H(+). Functionally, nucleoside triphosphate pyrophosphatase that hydrolyzes 7-methyl-GTP (m(7)GTP). May have a dual role in cell division arrest and in preventing the incorporation of modified nucleotides into cellular nucleic acids. This is 7-methyl-GTP pyrophosphatase from Rhizobium johnstonii (strain DSM 114642 / LMG 32736 / 3841) (Rhizobium leguminosarum bv. viciae).